Consider the following 278-residue polypeptide: Undecaprenyl-diphosphatase 1 (278 aa).

Helical transmembrane passes span 45-65, 95-115, 119-139, 191-211, 225-245, and 256-276; these read AVIGFSAVIQVGAIAAVLVYF, WWVIYATIPIVLVGLAAKPLI, LASLWVVAGSLIVGSGVMWWA, VAATRLSFFLGIPALTGAGLY, PLAVGTLVSFVVAYASIAWLL, and FVVYRIAVGVLLFGLLGTGVL.

The protein belongs to the UppP family.

It is found in the cell membrane. It catalyses the reaction di-trans,octa-cis-undecaprenyl diphosphate + H2O = di-trans,octa-cis-undecaprenyl phosphate + phosphate + H(+). Its function is as follows. Catalyzes the dephosphorylation of undecaprenyl diphosphate (UPP). Confers resistance to bacitracin. This chain is Undecaprenyl-diphosphatase 1, found in Streptomyces coelicolor (strain ATCC BAA-471 / A3(2) / M145).